The chain runs to 143 residues: Small ribosomal subunit protein uS12B (143 aa).

3,4-dihydroxyproline is present on Pro62.

This sequence belongs to the universal ribosomal protein uS12 family. Component of the small ribosomal subunit (SSU). Mature yeast ribosomes consist of a small (40S) and a large (60S) subunit. The 40S small subunit contains 1 molecule of ribosomal RNA (18S rRNA) and at least 33 different proteins. The large 60S subunit contains 3 rRNA molecules (25S, 5.8S and 5S rRNA) and at least 46 different proteins. Post-translationally, hydroxylation at Pro-62 affects translation termination efficiency.

Its subcellular location is the cytoplasm. It localises to the nucleus. The protein localises to the nucleolus. Functionally, component of the ribosome, a large ribonucleoprotein complex responsible for the synthesis of proteins in the cell. The small ribosomal subunit (SSU) binds messenger RNAs (mRNAs) and translates the encoded message by selecting cognate aminoacyl-transfer RNA (tRNA) molecules. The large subunit (LSU) contains the ribosomal catalytic site termed the peptidyl transferase center (PTC), which catalyzes the formation of peptide bonds, thereby polymerizing the amino acids delivered by tRNAs into a polypeptide chain. The nascent polypeptides leave the ribosome through a tunnel in the LSU and interact with protein factors that function in enzymatic processing, targeting, and the membrane insertion of nascent chains at the exit of the ribosomal tunnel. The chain is Small ribosomal subunit protein uS12B (rps2302) from Schizosaccharomyces pombe (strain 972 / ATCC 24843) (Fission yeast).